Consider the following 119-residue polypeptide: MKMVAFVFSHAPHGISLGREGLDAIFSISLIFKKISVFFIGDGVLQLIKNQQPEHILARNYTSSFSILSLYNIKDLYCCKASLLERGLNNNNNFILNIDVLDSYNLRLKLDNYDAIINF.

The protein belongs to the DsrF/TusC family. Heterohexamer, formed by a dimer of trimers. The hexameric TusBCD complex contains 2 copies each of TusB, TusC and TusD. The TusBCD complex interacts with TusE.

Its subcellular location is the cytoplasm. Functionally, part of a sulfur-relay system required for 2-thiolation of 5-methylaminomethyl-2-thiouridine (mnm(5)s(2)U) at tRNA wobble positions. The chain is Protein TusC from Buchnera aphidicola subsp. Acyrthosiphon pisum (strain 5A).